Reading from the N-terminus, the 870-residue chain is Histidine biosynthesis trifunctional protein (870 aa).

The interval 1-285 is phosphoribosyl-AMP cyclohydrolase; the sequence is METTLPLPFL…KFVVKQKGRF (285 aa). The interval 286 to 367 is phosphoribosyl-ATP pyrophosphohydrolase; it reads CHLDQSGCFG…FYFALTRAVA (82 aa). The histidinol dehydrogenase stretch occupies residues 368–870; the sequence is AGVTLADIER…IRLEHMSKSN (503 aa). Positions 693 and 696 each coordinate Zn(2+). Catalysis depends on residues Glu-762 and His-763. 2 residues coordinate Zn(2+): Asp-796 and His-855.

The protein in the C-terminal section; belongs to the histidinol dehydrogenase family. It depends on Zn(2+) as a cofactor.

It carries out the reaction 1-(5-phospho-beta-D-ribosyl)-5'-AMP + H2O = 1-(5-phospho-beta-D-ribosyl)-5-[(5-phospho-beta-D-ribosylamino)methylideneamino]imidazole-4-carboxamide. The catalysed reaction is 1-(5-phospho-beta-D-ribosyl)-ATP + H2O = 1-(5-phospho-beta-D-ribosyl)-5'-AMP + diphosphate + H(+). The enzyme catalyses L-histidinol + 2 NAD(+) + H2O = L-histidine + 2 NADH + 3 H(+). Its pathway is amino-acid biosynthesis; L-histidine biosynthesis; L-histidine from 5-phospho-alpha-D-ribose 1-diphosphate: step 2/9. It participates in amino-acid biosynthesis; L-histidine biosynthesis; L-histidine from 5-phospho-alpha-D-ribose 1-diphosphate: step 3/9. The protein operates within amino-acid biosynthesis; L-histidine biosynthesis; L-histidine from 5-phospho-alpha-D-ribose 1-diphosphate: step 9/9. The chain is Histidine biosynthesis trifunctional protein (his-3) from Neurospora crassa (strain ATCC 24698 / 74-OR23-1A / CBS 708.71 / DSM 1257 / FGSC 987).